The chain runs to 181 residues: Translation initiation factor IF-3, chloroplastic (181 aa).

It belongs to the IF-3 family. In terms of assembly, monomer.

The protein resides in the plastid. It localises to the chloroplast. Its function is as follows. IF-3 binds to the 30S ribosomal subunit and shifts the equilibrium between 70S ribosomes and their 50S and 30S subunits in favor of the free subunits, thus enhancing the availability of 30S subunits on which protein synthesis initiation begins. The polypeptide is Translation initiation factor IF-3, chloroplastic (Galdieria sulphuraria (Red alga)).